Here is a 261-residue protein sequence, read N- to C-terminus: 6-carboxyhexanoate--CoA ligase (261 aa).

This sequence belongs to the BioW family. As to quaternary structure, homodimer. Mg(2+) is required as a cofactor.

It carries out the reaction heptanedioate + ATP + CoA = 6-carboxyhexanoyl-CoA + AMP + diphosphate. The protein operates within metabolic intermediate metabolism; pimeloyl-CoA biosynthesis; pimeloyl-CoA from pimelate: step 1/1. Its function is as follows. Catalyzes the transformation of pimelate into pimeloyl-CoA with concomitant hydrolysis of ATP to AMP. The protein is 6-carboxyhexanoate--CoA ligase of Bacillus licheniformis (strain ATCC 14580 / DSM 13 / JCM 2505 / CCUG 7422 / NBRC 12200 / NCIMB 9375 / NCTC 10341 / NRRL NRS-1264 / Gibson 46).